Reading from the N-terminus, the 728-residue chain is MTKQVFKTVFAGRELVVETGQVAKQANGSAVVRYGESTVLTAATMSKKMATGDFFPLQVNYEEKMYAAGKYPGGFNKREGRPSTDATLTARLIDRPIRPMFAEGFRNEVQVINTVLSYDEDASPQMAAMFGSSLALSISDIPFNGPIAGVQVGYVDGEFIINPSKEQKEVSLLELTVAGTKDAINMVESGAKELSEDVMLEALLKGHQAVKELIAFQEEIVAAVGKEKAEVELLHVDEELQAEIVAAYNSDLQKAVQVEEKLAREAATQAVKDQVTAVYEEKYADHEEFDRIMRDVAEILEQMEHAEVRRLITEDKVRPDGRKVDEIRPLDAEVDYLPRVHGSGLFTRGQTQALSVLTLAPMGETQIVDGLDPEYKKRFMHHYNFPQYSVGETGRYGAPGRREIGHGALGERALEQVLPSLEEFPYAIRLVAEVLESNGSSSQASICAGTLALMAGGVPIKAPVAGIAMGLISDGNNYTVLTDIQGLEDHFGDMDFKVAGTREGITALQMDIKIEGITAEILTEALDQAKKARFEILDLIEATIPAPRPELAPTAPKIDTIKIDVDKIKIVIGKGGETIDKIIAETGVKIDIDEEGNVSIYSSDQDAINRAKEIIAGLVREAKVDEVYHAKVVRIEKFGAFVNLFDKTDALVHISELAWTRTNNVEDVVQIGDEVDVMVIKIDAKGRVDASMKALLPRPPKPEKSDKHHDKGHPHKKHEEAPLTQTEE.

Asp489 and Asp495 together coordinate Mg(2+). Positions 556 to 615 constitute a KH domain; that stretch reads PKIDTIKIDVDKIKIVIGKGGETIDKIIAETGVKIDIDEEGNVSIYSSDQDAINRAKEII. The 69-residue stretch at 625–693 folds into the S1 motif domain; that stretch reads DEVYHAKVVR…AKGRVDASMK (69 aa). The disordered stretch occupies residues 691-728; it reads SMKALLPRPPKPEKSDKHHDKGHPHKKHEEAPLTQTEE. Basic and acidic residues predominate over residues 700–709; that stretch reads PKPEKSDKHH.

The protein belongs to the polyribonucleotide nucleotidyltransferase family. Mg(2+) is required as a cofactor.

It is found in the cytoplasm. It catalyses the reaction RNA(n+1) + phosphate = RNA(n) + a ribonucleoside 5'-diphosphate. Functionally, involved in mRNA degradation. Catalyzes the phosphorolysis of single-stranded polyribonucleotides processively in the 3'- to 5'-direction. This is Polyribonucleotide nucleotidyltransferase from Streptococcus gordonii (strain Challis / ATCC 35105 / BCRC 15272 / CH1 / DL1 / V288).